Here is a 1129-residue protein sequence, read N- to C-terminus: DNA-directed RNA polymerase I subunit RPA2 (1129 aa).

The C4-type zinc-finger motif lies at C1061–C1093.

It belongs to the RNA polymerase beta chain family. As to quaternary structure, component of the RNA polymerase I (Pol I) complex consisting of at least 13 subunits.

Its subcellular location is the nucleus. The protein localises to the nucleolus. The enzyme catalyses RNA(n) + a ribonucleoside 5'-triphosphate = RNA(n+1) + diphosphate. In terms of biological role, DNA-dependent RNA polymerase catalyzes the transcription of DNA into RNA using the four ribonucleoside triphosphates as substrates. Second largest core component of RNA polymerase I which synthesizes ribosomal RNA precursors. Proposed to contribute to the polymerase catalytic activity and forms the polymerase active center together with the largest subunit. Pol I is composed of mobile elements and RPA2 is part of the core element with the central large cleft and probably a clamp element that moves to open and close the cleft. This is DNA-directed RNA polymerase I subunit RPA2 from Drosophila melanogaster (Fruit fly).